We begin with the raw amino-acid sequence, 457 residues long: TnpB-like protein ORF457 (457 aa).

The interval 1–22 (MPPSSGQLLGDEEREPTSTPAI) is disordered.

This sequence in the N-terminal section; belongs to the transposase 2 family. In the C-terminal section; belongs to the transposase 35 family.

This is TnpB-like protein ORF457 from Acidianus two-tailed virus (ATV).